The primary structure comprises 121 residues: Large ribosomal subunit protein uL18 (121 aa).

It belongs to the universal ribosomal protein uL18 family. Part of the 50S ribosomal subunit; part of the 5S rRNA/L5/L18/L25 subcomplex. Contacts the 5S and 23S rRNAs.

Functionally, this is one of the proteins that bind and probably mediate the attachment of the 5S RNA into the large ribosomal subunit, where it forms part of the central protuberance. The polypeptide is Large ribosomal subunit protein uL18 (Delftia acidovorans (strain DSM 14801 / SPH-1)).